A 384-amino-acid chain; its full sequence is MDNQVLEQKIVNEEYKIWKKNVPYLYDLMFSHTLEWPSLSVQWFPDVRRDEEAGRTTQRLLLSTHTSGSEEEYILIAKVEFPDEFDESLNEEVGGDMRLKIIQRISIMDEANRVRYNPSACNVLAVRSDLPDIHVYDYTKHLSHEKIPRPDMVLRGHSAGGFGLSWNHLNPGELAGCGEGGEVCVFDVSQESSSISPTVVLRRHETAVNDCAFSFFDKKLLSSAGDGGMVVLWDTRSEDCIHAIEEAHTSDILSVRFSPLDGNVIATSSCDGSVKVWDRRSLSQPLHILLGHSKDVVSVEWSPHNDKVLASGSTDRRVIVWDLGQAGAEVPEEYKAEGPPEMKFLHGGHTSTVCDISWNPAEPFEIASVSEDNILQIWQMPQPE.

WD repeat units lie at residues 156–196 (GHSA…SSIS), 203–243 (RHET…CIHA), 247–287 (AHTS…QPLH), 291–331 (GHSK…AEVP), and 348–384 (GHTS…PQPE).

This sequence belongs to the WD repeat RBAP46/RBAP48/MSI1 family. Component of the HAT-B complex.

The protein resides in the cytoplasm. Its subcellular location is the nucleus. Functionally, regulatory subunit of the histone acetylase B (HAT-B) complex. The complex acetylates histone H4 which is required for telomeric silencing. The protein is Histone acetyltransferase type B subunit 2 (HAT2) of Encephalitozoon cuniculi (strain GB-M1) (Microsporidian parasite).